The primary structure comprises 187 residues: Photosystem I assembly protein Ycf4 (187 aa).

The next 2 membrane-spanning stretches (helical) occupy residues 21–43 (LSNY…AGIS) and 69–91 (LLYG…WNVG).

The protein belongs to the Ycf4 family.

The protein resides in the plastid. It is found in the cyanelle thylakoid membrane. Functionally, seems to be required for the assembly of the photosystem I complex. This Cyanophora paradoxa protein is Photosystem I assembly protein Ycf4.